The chain runs to 1612 residues: Phospholipid-transporting ATPase DNF2 (1612 aa).

Residues 1–74 (MSSPSKPTSP…MKDISTPDLS (74 aa)) form a disordered region. Residues 1–252 (MSSPSKPTSP…TFFPKNILFQ (252 aa)) are Cytoplasmic-facing. Positions 20–30 (GSASNGLSSMS) are enriched in low complexity. Threonine 70 carries the post-translational modification Phosphothreonine. Serine 85 carries the post-translational modification Phosphoserine. The helical transmembrane segment at 253–273 (FHNFANIYFLILLILGAFQIF) threads the bilayer. Positions 272–279 (IFGVTNPG) are involved in phosphatidylcholine substrate selection. Topologically, residues 274-277 (GVTN) are extracellular. Residues 278-298 (PGFASVPLIVIVIITAIKDGI) traverse the membrane as a helical segment. At 299 to 598 (EDSRRTVLDL…RISRELNFSV (300 aa)) the chain is on the cytoplasmic side. Basic and acidic residues predominate over residues 364 to 373 (KLQKKREELR). Residues 364 to 384 (KLQKKREELRRKRNSRSFGPR) form a disordered region. Serine 389, serine 392, serine 396, and serine 403 each carry phosphoserine. Position 406 is a phosphotyrosine (tyrosine 406). The helical transmembrane segment at 599 to 619 (ILNFVLLFILCFTAGIVNGVY) threads the bilayer. Residues 620-639 (YKQKPRSRDYFEFGTIGGSA) are Extracellular-facing. Residues 631 to 635 (EFGTI) form an involved in phosphatidylcholine substrate selection region. The chain crosses the membrane as a helical span at residues 640–660 (STNGFVSFWVAVILYQSLVPI). The Cytoplasmic portion of the chain corresponds to 661-1231 (SLYISVEIIK…WCYKRLAEMI (571 aa)). Residue aspartate 712 is the 4-aspartylphosphate intermediate of the active site. Aspartate 712, lysine 713, and threonine 714 together coordinate ATP. Aspartate 712 lines the Mg(2+) pocket. Threonine 714 lines the Mg(2+) pocket. At threonine 782 the chain carries Phosphothreonine. Residues glutamate 846, phenylalanine 887, serine 889, lysine 892, and lysine 916 each contribute to the ATP site. Lysine 938 is covalently cross-linked (Glycyl lysine isopeptide (Lys-Gly) (interchain with G-Cter in ubiquitin)). The ATP site is built by arginine 952, threonine 953, threonine 1032, glycine 1033, aspartate 1034, arginine 1147, and lysine 1153. Aspartate 1173 serves as a coordination point for Mg(2+). ATP is bound by residues asparagine 1176 and aspartate 1177. Aspartate 1177 provides a ligand contact to Mg(2+). Residues 1232–1252 (PQFFYKNVIFTLSLFWYGIYN) traverse the membrane as a helical segment. Over 1253–1262 (NFDGSYLFEY) the chain is Extracellular. A helical transmembrane segment spans residues 1263-1283 (TYLTFYNLAFTSVPVILLAVL). Over 1284 to 1313 (DQDVSDTVSMLVPQLYRVGILRKEWNQTKF) the chain is Cytoplasmic. The helical transmembrane segment at 1314 to 1334 (LWYMLDGVYQSVICFFFPYLA) threads the bilayer. Topologically, residues 1335–1350 (YHKNMVVTENGLGLDH) are extracellular. Residues 1351–1371 (RYFVGVFVTAIAVTSCNFYVF) traverse the membrane as a helical segment. The Cytoplasmic portion of the chain corresponds to 1372-1377 (MEQYRW). Residues 1378–1398 (DWFCGLFICLSLAVFYGWTGI) form a helical membrane-spanning segment. The Extracellular portion of the chain corresponds to 1399–1418 (WTSSSSSNEFYKGAARVFAQ). The helical transmembrane segment at 1419–1439 (PAYWAVLFVGVLFCLLPRFTI) threads the bilayer. Arginine 1436 is a binding site for a 1,2-diacyl-sn-glycero-3-phospho-L-serine. Over 1440-1612 (DCIRKIFYPK…TLLSQRSRDR (173 aa)) the chain is Cytoplasmic. Serine 1542 is modified (phosphoserine). Residues 1544–1563 (VTTTNNLPRRSMASARGNKL) are disordered. At serine 1592 the chain carries Phosphoserine.

Belongs to the cation transport ATPase (P-type) (TC 3.A.3) family. Type IV subfamily. As to quaternary structure, component of a flippase complex consisting of DNF1 and LEM3. Interacts with LEM3; the interaction is direct. The cofactor is Mg(2+). In terms of processing, phosphorylated by FPK1 and KIN82.

Its subcellular location is the cell membrane. It carries out the reaction ATP + H2O + phospholipidSide 1 = ADP + phosphate + phospholipidSide 2.. The catalysed reaction is a 1,2-diacyl-sn-glycero-3-phosphoethanolamine(out) + ATP + H2O = a 1,2-diacyl-sn-glycero-3-phosphoethanolamine(in) + ADP + phosphate + H(+). It catalyses the reaction a 1,2-diacyl-sn-glycero-3-phosphocholine(out) + ATP + H2O = a 1,2-diacyl-sn-glycero-3-phosphocholine(in) + ADP + phosphate + H(+). The enzyme catalyses a beta-D-glucosyl-(1&lt;-&gt;1')-N-acylsphing-4-enine(out) + ATP + H2O = a beta-D-glucosyl-(1&lt;-&gt;1')-N-acylsphing-4-enine(in) + ADP + phosphate + H(+). It carries out the reaction a 1,2-diacyl-sn-glycero-3-phospho-L-serine(out) + ATP + H2O = a 1,2-diacyl-sn-glycero-3-phospho-L-serine(in) + ADP + phosphate + H(+). Its activity is regulated as follows. Phosphatidylcholine flippase activity is inhibited by glucosylsphingosine, lactosylsphingosine, lysophosphatidylcholine and to a lesser degree sphingosine-1-phosphate and lysosphingomyelin. Glucosylceramide flippase activity is inhibited by lysophosphatidylcholine, glucosylsphingosine and to a lesser degree lactosylsphingosine whereas lysosphingomyelin has a stimulatory effect at low concentrations. Its function is as follows. Catalytic component of a P4-ATPase flippase complex which catalyzes the hydrolysis of ATP coupled to the transport of glucosylceramide, phosphatidylcholine, phosphatidylethanolamine, and small amounts of phosphatidylserine from the lumenal to the cytosolic leaflet of the cell membrane and ensures the maintenance of asymmetric distribution of phospholipids. Does not appear to transport sphingomyelin, inositol phosphoceramide or phosphatidic acid. Required for efficient endocytosis. Required for protein transport from Golgi to vacuoles. The sequence is that of Phospholipid-transporting ATPase DNF2 (DNF2) from Saccharomyces cerevisiae (strain ATCC 204508 / S288c) (Baker's yeast).